A 537-amino-acid chain; its full sequence is Biotin carboxylase, chloroplastic (537 aa).

The transit peptide at 1 to 71 (MDASMITNSK…ATSGGLGVTC (71 aa)) directs the protein to the chloroplast. ATP-binding positions include K188, K230, 236–237 (GG), 272–275 (EKFV), and H280. The ATP-grasp domain occupies 192–389 (RETMKNAGVP…LIEEQIRVAM (198 aa)). K309 is a binding site for hydrogencarbonate. E347 and E360 together coordinate ATP. Residues E347, E360, and N362 each coordinate Mg(2+). Mn(2+) is bound by residues E347, E360, and N362. R364, V367, and R410 together coordinate hydrogencarbonate. Residue R364 is part of the active site. R410 provides a ligand contact to biotin.

As to quaternary structure, acetyl-CoA carboxylase is a heterohexamer composed of biotin carboxyl carrier protein, biotin carboxylase and two subunits each of ACCase subunit alpha and ACCase plastid-coded subunit beta (accD). Mg(2+) is required as a cofactor. The cofactor is Mn(2+). As to expression, accumulates in fatty acids synthesizing tissues. Mostly expressed in siliques, developing leaves, and flowers, present in roots and embryos (especially at torpedo stage), and, to a lower extent, in mature leaves.

Its subcellular location is the plastid. It is found in the chloroplast. The catalysed reaction is N(6)-biotinyl-L-lysyl-[protein] + hydrogencarbonate + ATP = N(6)-carboxybiotinyl-L-lysyl-[protein] + ADP + phosphate + H(+). The protein operates within lipid metabolism; malonyl-CoA biosynthesis; malonyl-CoA from acetyl-CoA: step 1/1. This protein is a component of the acetyl coenzyme A carboxylase complex; first, biotin carboxylase catalyzes the carboxylation of the carrier protein and then the transcarboxylase transfers the carboxyl group to form malonyl-CoA. In Arabidopsis thaliana (Mouse-ear cress), this protein is Biotin carboxylase, chloroplastic (CAC2).